A 119-amino-acid polypeptide reads, in one-letter code: Evasin P983 (119 aa).

Positions 1-21 are cleaved as a signal peptide; sequence MKASFCVIASCLVVFALKGTA. 4 disulfide bridges follow: Cys37-Cys59, Cys55-Cys97, Cys72-Cys102, and Cys92-Cys111. Asn48 and Asn67 each carry an N-linked (GlcNAc...) asparagine glycan.

It localises to the secreted. Its function is as follows. Salivary chemokine-binding protein which binds to host chemokines CCL2, CCL3 and CCL8. This is Evasin P983 from Amblyomma cajennense (Cayenne tick).